Consider the following 428-residue polypeptide: Dual-specificity RNA methyltransferase RlmN (428 aa).

Over residues 1 to 17 (MPLHRVEALGEPQDRTG) the composition is skewed to basic and acidic residues. The interval 1 to 44 (MPLHRVEALGEPQDRTGKTFSGRTNGPISSPLTDTERRMSIPQN) is disordered. Polar residues predominate over residues 18-33 (KTFSGRTNGPISSPLT). The active-site Proton acceptor is Glu136. In terms of domain architecture, Radical SAM core spans 142–381 (EDDRGALCVS…APIRMPRGRD (240 aa)). Residues Cys149 and Cys386 are joined by a disulfide bond. Residues Cys156, Cys160, and Cys163 each coordinate [4Fe-4S] cluster. S-adenosyl-L-methionine-binding positions include 212-213 (GE), Ser244, 266-268 (SLH), and Asn343. The S-methylcysteine intermediate role is filled by Cys386.

Belongs to the radical SAM superfamily. RlmN family. The cofactor is [4Fe-4S] cluster.

Its subcellular location is the cytoplasm. It carries out the reaction adenosine(2503) in 23S rRNA + 2 reduced [2Fe-2S]-[ferredoxin] + 2 S-adenosyl-L-methionine = 2-methyladenosine(2503) in 23S rRNA + 5'-deoxyadenosine + L-methionine + 2 oxidized [2Fe-2S]-[ferredoxin] + S-adenosyl-L-homocysteine. The enzyme catalyses adenosine(37) in tRNA + 2 reduced [2Fe-2S]-[ferredoxin] + 2 S-adenosyl-L-methionine = 2-methyladenosine(37) in tRNA + 5'-deoxyadenosine + L-methionine + 2 oxidized [2Fe-2S]-[ferredoxin] + S-adenosyl-L-homocysteine. Functionally, specifically methylates position 2 of adenine 2503 in 23S rRNA and position 2 of adenine 37 in tRNAs. m2A2503 modification seems to play a crucial role in the proofreading step occurring at the peptidyl transferase center and thus would serve to optimize ribosomal fidelity. This Rhodospirillum rubrum (strain ATCC 11170 / ATH 1.1.1 / DSM 467 / LMG 4362 / NCIMB 8255 / S1) protein is Dual-specificity RNA methyltransferase RlmN.